A 626-amino-acid polypeptide reads, in one-letter code: Transketolase-like protein 2 (626 aa).

Substrate is bound at residue His37. Thiamine diphosphate contacts are provided by residues Ser40, His77, and 123-125 (GSL). Residue Asp155 participates in Mg(2+) binding. Thiamine diphosphate-binding residues include Gly156 and Asn185. Residues Asn185 and Leu187 each contribute to the Mg(2+) site. The thiamine diphosphate site is built by Lys247 and His261. Residues His261 and Ser348 each coordinate substrate. Thiamine diphosphate-binding residues include Glu369 and Phe395. Glu369 serves as the catalytic Proton donor. Residues His419 and Asp427 each contribute to the substrate site. Gln431 serves as a coordination point for thiamine diphosphate. Substrate is bound at residue Arg477.

This sequence belongs to the transketolase family. In terms of assembly, homodimer. Mg(2+) serves as cofactor. The cofactor is Ca(2+). Mn(2+) is required as a cofactor. Requires Co(2+) as cofactor. It depends on thiamine diphosphate as a cofactor.

The enzyme catalyses D-sedoheptulose 7-phosphate + D-glyceraldehyde 3-phosphate = aldehydo-D-ribose 5-phosphate + D-xylulose 5-phosphate. Functionally, plays an essential role in total transketolase activity and cell proliferation in cancer cells; after transfection with anti-TKTL1 siRNA, total transketolase activity dramatically decreases and proliferation was significantly inhibited in cancer cells. Plays a pivotal role in carcinogenesis. The polypeptide is Transketolase-like protein 2 (TKTL2) (Bos taurus (Bovine)).